A 148-amino-acid polypeptide reads, in one-letter code: SsrA-binding protein (148 aa).

This sequence belongs to the SmpB family.

The protein resides in the cytoplasm. Required for rescue of stalled ribosomes mediated by trans-translation. Binds to transfer-messenger RNA (tmRNA), required for stable association of tmRNA with ribosomes. tmRNA and SmpB together mimic tRNA shape, replacing the anticodon stem-loop with SmpB. tmRNA is encoded by the ssrA gene; the 2 termini fold to resemble tRNA(Ala) and it encodes a 'tag peptide', a short internal open reading frame. During trans-translation Ala-aminoacylated tmRNA acts like a tRNA, entering the A-site of stalled ribosomes, displacing the stalled mRNA. The ribosome then switches to translate the ORF on the tmRNA; the nascent peptide is terminated with the 'tag peptide' encoded by the tmRNA and targeted for degradation. The ribosome is freed to recommence translation, which seems to be the essential function of trans-translation. The sequence is that of SsrA-binding protein from Pseudothermotoga lettingae (strain ATCC BAA-301 / DSM 14385 / NBRC 107922 / TMO) (Thermotoga lettingae).